A 259-amino-acid chain; its full sequence is ATP synthase subunit b 3 (259 aa).

The chain crosses the membrane as a helical span at residues 5 to 27; the sequence is WWTLGLQAINVLILIWILSRFLF.

It belongs to the ATPase B chain family. As to quaternary structure, F-type ATPases have 2 components, F(1) - the catalytic core - and F(0) - the membrane proton channel. F(1) has five subunits: alpha(3), beta(3), gamma(1), delta(1), epsilon(1). F(0) has three main subunits: a(1), b(2) and c(10-14). The alpha and beta chains form an alternating ring which encloses part of the gamma chain. F(1) is attached to F(0) by a central stalk formed by the gamma and epsilon chains, while a peripheral stalk is formed by the delta and b chains.

The protein resides in the cell inner membrane. Its function is as follows. F(1)F(0) ATP synthase produces ATP from ADP in the presence of a proton or sodium gradient. F-type ATPases consist of two structural domains, F(1) containing the extramembraneous catalytic core and F(0) containing the membrane proton channel, linked together by a central stalk and a peripheral stalk. During catalysis, ATP synthesis in the catalytic domain of F(1) is coupled via a rotary mechanism of the central stalk subunits to proton translocation. In terms of biological role, component of the F(0) channel, it forms part of the peripheral stalk, linking F(1) to F(0). The chain is ATP synthase subunit b 3 from Beijerinckia indica subsp. indica (strain ATCC 9039 / DSM 1715 / NCIMB 8712).